We begin with the raw amino-acid sequence, 216 residues long: ATP-dependent Clp protease proteolytic subunit (216 aa).

The Nucleophile role is filled by Ser-101. His-126 is a catalytic residue.

This sequence belongs to the peptidase S14 family. In terms of assembly, component of the chloroplastic Clp protease core complex.

It is found in the plastid. Its subcellular location is the chloroplast stroma. It carries out the reaction Hydrolysis of proteins to small peptides in the presence of ATP and magnesium. alpha-casein is the usual test substrate. In the absence of ATP, only oligopeptides shorter than five residues are hydrolyzed (such as succinyl-Leu-Tyr-|-NHMec, and Leu-Tyr-Leu-|-Tyr-Trp, in which cleavage of the -Tyr-|-Leu- and -Tyr-|-Trp bonds also occurs).. Its function is as follows. Cleaves peptides in various proteins in a process that requires ATP hydrolysis. Has a chymotrypsin-like activity. Plays a major role in the degradation of misfolded proteins. This Saccharum hybrid (Sugarcane) protein is ATP-dependent Clp protease proteolytic subunit.